Here is a 678-residue protein sequence, read N- to C-terminus: DNA ligase (678 aa).

NAD(+) contacts are provided by residues 47–51 (DSDYD), 96–97 (SL), and Glu122. Catalysis depends on Lys124, which acts as the N6-AMP-lysine intermediate. Arg145, Glu182, Lys300, and Lys324 together coordinate NAD(+). Positions 418, 421, 436, and 442 each coordinate Zn(2+). One can recognise a BRCT domain in the interval 602-678 (AYNESFTGKT…ILEDNLKDLL (77 aa)).

It belongs to the NAD-dependent DNA ligase family. LigA subfamily. It depends on Mg(2+) as a cofactor. Mn(2+) is required as a cofactor.

It catalyses the reaction NAD(+) + (deoxyribonucleotide)n-3'-hydroxyl + 5'-phospho-(deoxyribonucleotide)m = (deoxyribonucleotide)n+m + AMP + beta-nicotinamide D-nucleotide.. Its function is as follows. DNA ligase that catalyzes the formation of phosphodiester linkages between 5'-phosphoryl and 3'-hydroxyl groups in double-stranded DNA using NAD as a coenzyme and as the energy source for the reaction. It is essential for DNA replication and repair of damaged DNA. The chain is DNA ligase from Francisella tularensis subsp. tularensis (strain SCHU S4 / Schu 4).